A 223-amino-acid polypeptide reads, in one-letter code: Ubiquitin-conjugating enzyme E2 S (223 aa).

An N-acetylmethionine modification is found at Met1. In terms of domain architecture, UBC core spans 11 to 157 (HIIRLVYKEV…ARLLTEIHGG (147 aa)). Residue Cys95 is the Glycyl thioester intermediate of the active site. Residues 155-223 (HGGAGGPSGG…TDKKRALRRL (69 aa)) form a disordered region. Over residues 169 to 195 (GRATASGAAASTADPTAPGGPAGAEGP) the composition is skewed to low complexity. Ser174 bears the Phosphoserine mark. Positions 209 to 223 (AAKKKTDKKRALRRL) are enriched in basic residues.

It belongs to the ubiquitin-conjugating enzyme family. As to quaternary structure, component of the APC/C complex, composed of at least 14 distinct subunits that assemble into a complex of at least 19 chains with a combined molecular mass of around 1.2 MDa. Within this complex, directly interacts with ANAPC2 and ANAPC4. Interacts with CDC20, FZR1/CDH1 and VHL. Autoubiquitinated by the APC/C complex during G1, leading to its degradation by the proteasome.

The catalysed reaction is S-ubiquitinyl-[E1 ubiquitin-activating enzyme]-L-cysteine + [E2 ubiquitin-conjugating enzyme]-L-cysteine = [E1 ubiquitin-activating enzyme]-L-cysteine + S-ubiquitinyl-[E2 ubiquitin-conjugating enzyme]-L-cysteine.. It functions in the pathway protein modification; protein ubiquitination. Its function is as follows. Accepts ubiquitin from the E1 complex and catalyzes its covalent attachment to other proteins. Catalyzes 'Lys-11'-linked polyubiquitination. Acts as an essential factor of the anaphase promoting complex/cyclosome (APC/C), a cell cycle-regulated ubiquitin ligase that controls progression through mitosis. Acts by specifically elongating 'Lys-11'-linked polyubiquitin chains initiated by the E2 enzyme UBE2C/UBCH10 on APC/C substrates, enhancing the degradation of APC/C substrates by the proteasome and promoting mitotic exit. Also acts by elongating ubiquitin chains initiated by the E2 enzyme UBE2D1/UBCH5 in vitro; it is however unclear whether UBE2D1/UBCH5 acts as an E2 enzyme for the APC/C in vivo. Also involved in ubiquitination and subsequent degradation of VHL, resulting in an accumulation of HIF1A. In vitro able to promote polyubiquitination using all 7 ubiquitin Lys residues, except 'Lys-48'-linked polyubiquitination. The sequence is that of Ubiquitin-conjugating enzyme E2 S (UBE2S) from Bos taurus (Bovine).